A 409-amino-acid polypeptide reads, in one-letter code: Elongation factor Tu, chloroplastic (409 aa).

The tr-type G domain maps to 10 to 214 (KPHVNIGTIG…AVDTYIPTPE (205 aa)). The G1 stretch occupies residues 19-26 (GHVDHGKT). 19-26 (GHVDHGKT) provides a ligand contact to GTP. Threonine 26 contacts Mg(2+). The G2 stretch occupies residues 60-64 (GITIN). Residues 81–84 (DCPG) are G3. Residues 81-85 (DCPGH) and 136-139 (NKED) contribute to the GTP site. The interval 136–139 (NKED) is G4. The segment at 174 to 176 (SAL) is G5.

It belongs to the TRAFAC class translation factor GTPase superfamily. Classic translation factor GTPase family. EF-Tu/EF-1A subfamily.

The protein localises to the plastid. It localises to the chloroplast. It carries out the reaction GTP + H2O = GDP + phosphate + H(+). GTP hydrolase that promotes the GTP-dependent binding of aminoacyl-tRNA to the A-site of ribosomes during protein biosynthesis. This chain is Elongation factor Tu, chloroplastic (tufA), found in Pyropia yezoensis (Susabi-nori).